Consider the following 46-residue polypeptide: Alpha-1-antiproteinase (46 aa).

A Phosphoserine modification is found at S30.

Belongs to the serpin family. In terms of processing, N-glycosylated; contains bi- and triantennary glycans with a bisecting N-acetylglucosamine and fucose residue. As to expression, plasma.

It localises to the secreted. The chain is Alpha-1-antiproteinase from Notamacropus eugenii (Tammar wallaby).